A 141-amino-acid polypeptide reads, in one-letter code: Hemoglobin subunit alpha-2 (141 aa).

Residues 1-141 (VLSEGNKKII…VTYQLSSLYR (141 aa)) enclose the Globin domain. His-59 is an O2 binding site. Residue His-88 coordinates heme b.

This sequence belongs to the globin family. Heterotetramer of two alpha chains and two beta chains. As to expression, red blood cells.

Involved in oxygen transport from the lung to the various peripheral tissues. This Torpedo marmorata (Marbled electric ray) protein is Hemoglobin subunit alpha-2.